We begin with the raw amino-acid sequence, 361 residues long: Serpentine receptor class epsilon-32 (361 aa).

7 helical membrane passes run 34–54 (IIEL…LYVM), 66–86 (ILYI…LITI), 124–144 (LLIF…YGIL), 168–188 (IPIA…LSVL), 195–215 (FLSH…YLFI), 256–276 (LVFV…ALAF), and 286–306 (FVEN…MLTI).

This sequence belongs to the nematode receptor-like protein sre family.

Its subcellular location is the membrane. This Caenorhabditis elegans protein is Serpentine receptor class epsilon-32 (sre-32).